Reading from the N-terminus, the 310-residue chain is NADH-cytochrome b5 reductase 1 (310 aa).

The chain crosses the membrane as a helical span at residues W30–G50. An FAD-binding FR-type domain is found at N61–T166. Residues T146–K160 and H172–L209 contribute to the FAD site.

The protein belongs to the flavoprotein pyridine nucleotide cytochrome reductase family. In terms of assembly, monomer. Component of the 2-(3-amino-3-carboxypropyl)histidine synthase complex composed of dph1, dph2, dph3 and a NADH-dependent reductase, predominantly cbr1. FAD is required as a cofactor.

It localises to the mitochondrion outer membrane. It catalyses the reaction 2 Fe(III)-[cytochrome b5] + NADH = 2 Fe(II)-[cytochrome b5] + NAD(+) + H(+). The enzyme catalyses 2 Fe(3+)-[Dph3] + NADH = 2 Fe(2+)-[Dph3] + NAD(+) + H(+). The protein operates within protein modification; peptidyl-diphthamide biosynthesis. Functionally, NADH-dependent reductase for dph3 and cytochrome b5. Required for the first step of diphthamide biosynthesis, a post-translational modification of histidine which occurs in elongation factor 2. Dph1 and dph2 transfer a 3-amino-3-carboxypropyl (ACP) group from S-adenosyl-L-methionine (SAM) to a histidine residue, the reaction is assisted by a reduction system comprising dph3 and a NADH-dependent reductase, predominantly cbr1. By reducing dph3, also involved in the formation of the tRNA wobble base modification mcm5s 2U (5-methoxycarbonylmethyl-2-thiouridine), mediated by the elongator complex. The cytochrome b5/NADH cytochrome b5 reductase electron transfer system supports the catalytic activity of several sterol biosynthetic enzymes. This is NADH-cytochrome b5 reductase 1 (cbr1) from Emericella nidulans (strain FGSC A4 / ATCC 38163 / CBS 112.46 / NRRL 194 / M139) (Aspergillus nidulans).